The following is an 84-amino-acid chain: Small ribosomal subunit protein uS17c (84 aa).

This sequence belongs to the universal ribosomal protein uS17 family. As to quaternary structure, part of the 30S ribosomal subunit.

It is found in the plastid. Its subcellular location is the chloroplast. One of the primary rRNA binding proteins, it binds specifically to the 5'-end of 16S ribosomal RNA. This is Small ribosomal subunit protein uS17c (rps17) from Trieres chinensis (Marine centric diatom).